Reading from the N-terminus, the 245-residue chain is Biosynthetic peptidoglycan transglycosylase (245 aa).

A helical transmembrane segment spans residues 20-42; that stretch reads VYAGSVFAGAWLATQLFYLVQIA.

This sequence belongs to the glycosyltransferase 51 family.

Its subcellular location is the cell inner membrane. The catalysed reaction is [GlcNAc-(1-&gt;4)-Mur2Ac(oyl-L-Ala-gamma-D-Glu-L-Lys-D-Ala-D-Ala)](n)-di-trans,octa-cis-undecaprenyl diphosphate + beta-D-GlcNAc-(1-&gt;4)-Mur2Ac(oyl-L-Ala-gamma-D-Glu-L-Lys-D-Ala-D-Ala)-di-trans,octa-cis-undecaprenyl diphosphate = [GlcNAc-(1-&gt;4)-Mur2Ac(oyl-L-Ala-gamma-D-Glu-L-Lys-D-Ala-D-Ala)](n+1)-di-trans,octa-cis-undecaprenyl diphosphate + di-trans,octa-cis-undecaprenyl diphosphate + H(+). It participates in cell wall biogenesis; peptidoglycan biosynthesis. Its function is as follows. Peptidoglycan polymerase that catalyzes glycan chain elongation from lipid-linked precursors. This is Biosynthetic peptidoglycan transglycosylase from Burkholderia ambifaria (strain MC40-6).